The following is a 180-amino-acid chain: Putative 3-methyladenine DNA glycosylase (180 aa).

This sequence belongs to the DNA glycosylase MPG family.

In Wolbachia pipientis wMel, this protein is Putative 3-methyladenine DNA glycosylase.